A 2603-amino-acid polypeptide reads, in one-letter code: Ankyrin repeat domain-containing protein 17 (2603 aa).

M1 is subject to N-acetylmethionine. Residues 1–32 are compositionally biased toward low complexity; the sequence is MEKATVPAAAEGEGSPPAAAAVAAPPAAAAAE. The disordered stretch occupies residues 1–127; sequence MEKATVPAAA…DDDEEEEVSE (127 aa). Phosphoserine occurs at positions 15 and 42. Residues 68–77 are compositionally biased toward basic residues; the sequence is PHHKAKRNRT. Over residues 82–92 the composition is skewed to low complexity; it reads SSSESSSDSDN. Positions 93-107 are enriched in gly residues; that stretch reads SGGGGGGGGGGGGGT. Residues 112-127 show a composition bias toward acidic residues; sequence SEEEEDDDDEEEEVSE. A Phosphoserine modification is found at S152. ANK repeat units follow at residues 229–258, 262–291, 296–325, 329–358, 362–391, 396–425, 429–458, 462–491, 495–524, 529–558, 559–588, 592–621, 625–654, 659–688, and 692–721; these read SDNRSLAEACSEGDVNAVRKLLIEGRSVNE, EGESLLCLACSAGYYELAQVLLAMHANVED, GDITPLMAAANGGHVKIVKLLLAHKADVNA, TGNTALTYACAGGYVDVVKVLLESGASIED, NGHTPLMEAGSAGHVEVARLLLENGAGINT, FKESALTLACYKGHLEMVRFLLEAGADQEH, EMHTALMEACMDGHVEVARLLLDSGAQVNM, SFESPLTLAACGGHVELAALLIERGASLEE, EGYTPLMEAAREGHEEMVALLLGQGANINA, TQETALTLACCGGFLEVADFLIKAGADIEL, GCSTPLMEAAQEGHLELVKYLLAAGANVHA, TGDTALTYACENGHTDVADVLLQAGADLEH, GGRTPLMKAARAGHVCTVQFLISKGANVNR, NDHTVLSLACAGGHLAVVELLLAHGADPTH, and DGSTMLIEAAKGGHTSVVCYLLDYPNNLLA. Residue K314 forms a Glycyl lysine isopeptide (Lys-Gly) (interchain with G-Cter in SUMO2) linkage. The disordered stretch occupies residues 770 to 792; the sequence is VRSKAASKQKSNSHLPANSQDVQ. Over residues 775–792 the composition is skewed to polar residues; that stretch reads ASKQKSNSHLPANSQDVQ. The residue at position 799 (S799) is a Phosphoserine. 10 ANK repeats span residues 1078–1107, 1111–1140, 1145–1174, 1178–1207, 1213–1242, 1247–1276, 1280–1309, 1315–1344, 1348–1377, and 1381–1410; these read NHDTALTLACAGGHEELVQTLLERGASIEH, KGFTPLILAATAGHVGVVEILLDNGADIEA, TKDTPLSLACSGGRQEVVELLLARGANKEH, SDYTPLSLAASGGYVNIIKILLNAGAEINS, LGISPLMLAAMNGHTAAVKLLLDMGSDINA, NRNTALTLACFQGRTEVVSLLLDRKANVEH, TGLTPLMEAASGGYAEVGRVLLDKGADVNA, SRDTALTIAADKGHYKFCELLIGKGAHIDV, KGNTPLWLAANGGHLDVVQLLVQATADVDA, and RKITPLMAAFRKGHVKVVRYLVKEVNQFPS. A coiled-coil region spans residues 1438-1522; it reads VQAKDRQAAE…EKEKLKVEEE (85 aa). Phosphoserine is present on S1453. Disordered stretches follow at residues 1475 to 1496 and 1513 to 1713; these read AKREKRKEKRRKKKEEQRRKLE and EKEK…PKRE. The span at 1477-1487 shows a compositional bias: basic residues; sequence REKRKEKRRKK. Low complexity-rich tracts occupy residues 1526 to 1546, 1598 to 1607, and 1616 to 1636; these read LTEPPSATTTTTIGISATWTT, ESKSSSTSES, and SSCSDESSNSNSSRKSNNHAS. Phosphoserine is present on S1631. Composition is skewed to polar residues over residues 1638–1648 and 1671–1699; these read VVTTTMASKKQ and LSETVNEGTSNSLSTCTKSGPSPLSSPNG. Phosphoserine is present on residues S1692, S1696, and S1705. The region spanning 1721-1785 is the KH domain; sequence RRSKKVSVPS…ESTRQATQLI (65 aa). An Asymmetric dimethylarginine modification is found at R1870. Disordered regions lie at residues 1902–1991, 2007–2195, and 2269–2327; these read PRLP…PSVR, TTVT…SSSA, and VSSQ…YGSV. Composition is skewed to low complexity over residues 1946–1989 and 2007–2024; these read SNQN…SSPS and TTVTTTASNNSTAPTNAT. S2038, S2040, S2041, S2043, S2055, and S2063 each carry phosphoserine. Low complexity-rich tracts occupy residues 2068–2077, 2087–2108, and 2175–2189; these read ASASEQEASS, RPPHSSSSSGSSSGHSTQQQPP, and PPSHATAAPHKTPAP. The span at 2269 to 2298 shows a compositional bias: polar residues; that stretch reads VSSQSTPESMLSGKSSYLPNSDPLHQSDTS. A compositionally biased stretch (pro residues) spans 2303–2313; it reads FRPPLQRPAPS. S2373 bears the Phosphoserine mark. Residues 2378–2447 are disordered; that stretch reads LTPCSSASNE…TGTSAPSVIG (70 aa). Over residues 2379 to 2391 the composition is skewed to polar residues; sequence TPCSSASNESPAQ. The span at 2392 to 2411 shows a compositional bias: low complexity; sequence SVSSGVRAPSPAPSSVPLGS. S2401 is modified (phosphoserine). Residues 2435–2447 are compositionally biased toward polar residues; sequence IRQTGTSAPSVIG.

As to quaternary structure, interacts (via N-terminus) with NOD2. Interacts with CDK2, MCM3, MCM5, MCM7, CDC6 and PCNA. Interacts with MAVS and IFIH1. Interacts (via the second ankyrin repeat cluster) with RIGI. Post-translationally, phosphorylated by CDK2. As to expression, highly expressed in fetal liver. Detected in adult liver cells, ovarian oocytes, seminiferous tubules of the testes and pelvic region of the kidney. It was not detected in heart, gut, lung, spleen and skeletal muscle. Earliest specific in situ marker of hepatic differentiation during embryogenesis, useful for characterization of inductive events involved in hepatic specification.

It localises to the cytoplasm. It is found in the nucleus. Its function is as follows. Could play pivotal roles in cell cycle and DNA regulation. Involved in innate immune defense against viruse by positively regulating the viral dsRNA receptors RIGI and IFIH1 signaling pathways. Involves in NOD2- and NOD1-mediated responses to bacteria suggesting a role in innate antibacterial immune pathways too. Could play a central role for the formation and/or maintenance of the blood vessels of the circulation system. This is Ankyrin repeat domain-containing protein 17 (Ankrd17) from Mus musculus (Mouse).